The chain runs to 116 residues: Large ribosomal subunit protein bL17 (116 aa).

The protein belongs to the bacterial ribosomal protein bL17 family. As to quaternary structure, part of the 50S ribosomal subunit. Contacts protein L32.

This Microcystis aeruginosa (strain NIES-843 / IAM M-2473) protein is Large ribosomal subunit protein bL17.